A 251-amino-acid chain; its full sequence is NADH-quinone oxidoreductase subunit B (251 aa).

Positions 38, 39, 104, and 134 each coordinate [4Fe-4S] cluster. Positions 208–251 (RKGLPPGSMTDVGWIPPEARERLKAGRGAGASGSGEREEGKEGA) are disordered. Over residues 242–251 (GEREEGKEGA) the composition is skewed to basic and acidic residues.

The protein belongs to the complex I 20 kDa subunit family. As to quaternary structure, NDH-1 is composed of 14 different subunits. Subunits NuoB, C, D, E, F, and G constitute the peripheral sector of the complex. The cofactor is [4Fe-4S] cluster.

Its subcellular location is the cell membrane. The catalysed reaction is a quinone + NADH + 5 H(+)(in) = a quinol + NAD(+) + 4 H(+)(out). NDH-1 shuttles electrons from NADH, via FMN and iron-sulfur (Fe-S) centers, to quinones in the respiratory chain. The immediate electron acceptor for the enzyme in this species is believed to be a menaquinone. Couples the redox reaction to proton translocation (for every two electrons transferred, four hydrogen ions are translocated across the cytoplasmic membrane), and thus conserves the redox energy in a proton gradient. This is NADH-quinone oxidoreductase subunit B from Rubrobacter xylanophilus (strain DSM 9941 / JCM 11954 / NBRC 16129 / PRD-1).